A 273-amino-acid polypeptide reads, in one-letter code: Endochitinase EP3 (273 aa).

An N-terminal signal peptide occupies residues 1 to 28 (MLTPTISKSISLVTILLVLQAFSNTTKA). N-linked (GlcNAc...) asparagine glycosylation occurs at N24. Residues 29–63 (QNCGCSSELCCSQFGFCGNTSDYCGVGCQQGPCFA) enclose the Chitin-binding type-1 domain. 4 disulfides stabilise this stretch: C31-C39, C33-C45, C38-C52, and C56-C61. N47 carries N-linked (GlcNAc...) asparagine glycosylation. The tract at residues 70 to 273 (VSVAEIVTQE…GVDPGNNLTC (204 aa)) is catalytic. E136 functions as the Proton donor in the catalytic mechanism. Residues N157 and N270 are each glycosylated (N-linked (GlcNAc...) asparagine).

The protein belongs to the glycosyl hydrolase 19 family. Chitinase class I subfamily. In terms of tissue distribution, expressed in cells surrounding embryos, stems, seedlings, pollen, roots, shoots, inflorescence, flowers, siliques and leaves. Present in seedpods and seed embryos, but not in roots, inflorescence stems, leaves and flowers.

The enzyme catalyses Random endo-hydrolysis of N-acetyl-beta-D-glucosaminide (1-&gt;4)-beta-linkages in chitin and chitodextrins.. Functionally, probably involved in hypersensitive reaction upon Xanthomonas campestris infection. In Arabidopsis thaliana (Mouse-ear cress), this protein is Endochitinase EP3.